We begin with the raw amino-acid sequence, 172 residues long: Large ribosomal subunit protein uL10 (172 aa).

The protein belongs to the universal ribosomal protein uL10 family. Part of the ribosomal stalk of the 50S ribosomal subunit. The N-terminus interacts with L11 and the large rRNA to form the base of the stalk. The C-terminus forms an elongated spine to which L12 dimers bind in a sequential fashion forming a multimeric L10(L12)X complex.

Functionally, forms part of the ribosomal stalk, playing a central role in the interaction of the ribosome with GTP-bound translation factors. This Clostridium tetani (strain Massachusetts / E88) protein is Large ribosomal subunit protein uL10.